Reading from the N-terminus, the 41-residue chain is Probable cinnamyl alcohol dehydrogenase 2 (41 aa).

It belongs to the zinc-containing alcohol dehydrogenase family. It depends on Zn(2+) as a cofactor.

The catalysed reaction is (E)-cinnamyl alcohol + NADP(+) = (E)-cinnamaldehyde + NADPH + H(+). It carries out the reaction (E)-coniferol + NADP(+) = (E)-coniferaldehyde + NADPH + H(+). The enzyme catalyses (E)-sinapyl alcohol + NADP(+) = (E)-sinapaldehyde + NADPH + H(+). It catalyses the reaction (E)-4-coumaroyl alcohol + NADP(+) = (E)-4-coumaraldehyde + NADPH + H(+). The catalysed reaction is (E)-caffeyl alcohol + NADP(+) = (E)-caffeyl aldehyde + NADPH + H(+). It functions in the pathway aromatic compound metabolism; phenylpropanoid biosynthesis. Functionally, involved in lignin biosynthesis. Catalyzes the final step specific for the production of lignin monomers, like coniferyl alcohol, sinapyl alcohol and 4-coumaryl alcohol. In Pseudotsuga menziesii (Douglas-fir), this protein is Probable cinnamyl alcohol dehydrogenase 2.